The primary structure comprises 357 residues: Alanine racemase (357 aa).

Lys-33 (proton acceptor; specific for D-alanine) is an active-site residue. At Lys-33 the chain carries N6-(pyridoxal phosphate)lysine. Position 130 (Arg-130) interacts with substrate. Residue Tyr-252 is the Proton acceptor; specific for L-alanine of the active site. Residue Met-300 participates in substrate binding.

This sequence belongs to the alanine racemase family. The cofactor is pyridoxal 5'-phosphate.

The catalysed reaction is L-alanine = D-alanine. The protein operates within amino-acid biosynthesis; D-alanine biosynthesis; D-alanine from L-alanine: step 1/1. Functionally, catalyzes the interconversion of L-alanine and D-alanine. May also act on other amino acids. This chain is Alanine racemase (alr), found in Acidiphilium cryptum (strain JF-5).